Consider the following 1073-residue polypeptide: Guanylyl cyclase C (1073 aa).

Positions 1 to 23 are cleaved as a signal peptide; that stretch reads MKTLLLDLALWSLLFQPGWLSFS. Over 24–430 the chain is Extracellular; sequence SQVSQNCHNG…PNDITGRGPQ (407 aa). N-linked (GlcNAc...) asparagine glycans are attached at residues N32, N75, N79, N195, N284, N307, N345, and N402. A helical transmembrane segment spans residues 431-454; the sequence is ILMIAVFTLTGAVVLLLLVALLML. The Cytoplasmic portion of the chain corresponds to 455–1073; it reads RKYRKDYELR…NTTDKESTYF (619 aa). The region spanning 489 to 749 is the Protein kinase domain; sequence LKIDDDKRRD…KIETTLAKIF (261 aa). In terms of domain architecture, Guanylate cyclase spans 824–954; that stretch reads TIYFSDIVGF…DTVNTASRME (131 aa).

It belongs to the adenylyl cyclase class-4/guanylyl cyclase family. In terms of assembly, homotrimer. Interacts via its C-terminal region with NHERF4. Interacts with the lectin chaperone VIP36. Glycosylation at Asn-75 and/or Asn-79 is required for interaction with VIP36 while glycosylation at Asn-345 and Asn-402 modulates ligand-mediated GUCY2C activation.

The protein localises to the cell membrane. The protein resides in the endoplasmic reticulum membrane. The catalysed reaction is GTP = 3',5'-cyclic GMP + diphosphate. Guanylyl cyclase that catalyzes synthesis of cyclic GMP (cGMP) from GTP. Receptor for the E.coli heat-stable enterotoxin; E.coli enterotoxin markedly stimulates the accumulation of cGMP in mammalian cells expressing GUCY2C. Also activated by the endogenous peptides guanylin and uroguanylin. The chain is Guanylyl cyclase C from Homo sapiens (Human).